We begin with the raw amino-acid sequence, 414 residues long: MNLQRYWGEIPISSSQTNRSSFDLLPREFRLVEVHDPPLHQPSANKPKPPTMLDIPSEPCSLTIHTIQLIQHNRRLRNLIATAQAQNQQQTEGVKTEESEPLPSCPGSPPLPDDLLPLDCKNPNAPFQIRHSDPESDFYRGKGEPVTELSWHSCRQLLYQAVATILAHAGFDCANESVLETLTDVAHEYCLKFTKLLRFAVDREARLGQTPFPDVMEQVFHEVGIGSVLSLQKFWQHRIKDYHSYMLQISKQLSEEYERIVNPEKATEDAKPVKIKEEPVSDITFPVSEELEADLASGDQSLPMGVLGAQSERFPSNLEVEASPQASSAEVNASPLWNLAHVKMEPQESEEGNVSGHGVLGSDVFEEPMSGMSEAGIPQSPDDSDSSYGSHSTDSLMGSSPVFNQRCKKRMRKI.

The segment at 87–108 is disordered; it reads NQQQTEGVKTEESEPLPSCPGS. Ser-108 carries the post-translational modification Phosphoserine. Residue Lys-271 forms a Glycyl lysine isopeptide (Lys-Gly) (interchain with G-Cter in SUMO2) linkage. A phosphoserine mark is found at Ser-323 and Ser-334. The disordered stretch occupies residues 346–414; that stretch reads PQESEEGNVS…QRCKKRMRKI (69 aa). Over residues 386–395 the composition is skewed to low complexity; the sequence is SSYGSHSTDS.

Component of the STAGA transcription coactivator-HAT complex, at least composed of SUPT3H, SUPT7L, GCN5L2, TAF5L, TAF6L, TADA3L, TAD1L, TAF10, TAF12 and TAF9. Sumoylated. Expressed at high levels in adenocarcinomas and gliomas and low in esophageal cancers and malignant hematological disease. Also expressed at high level in the thymus, low in peripheral blood mononuclear cells, and lowest in the stomach, small intestine, and skeletal muscle.

The protein resides in the nucleus. The polypeptide is STAGA complex 65 subunit gamma (SUPT7L) (Homo sapiens (Human)).